Consider the following 256-residue polypeptide: Type III pantothenate kinase (256 aa).

7-14 (DVGNTRLK) contacts ATP. Substrate contacts are provided by residues tyrosine 96 and 103 to 106 (GADR). Residue aspartate 105 is the Proton acceptor of the active site. Position 133 (threonine 133) interacts with ATP. Threonine 183 serves as a coordination point for substrate.

It belongs to the type III pantothenate kinase family. In terms of assembly, homodimer. It depends on NH4(+) as a cofactor. K(+) serves as cofactor.

Its subcellular location is the cytoplasm. It carries out the reaction (R)-pantothenate + ATP = (R)-4'-phosphopantothenate + ADP + H(+). Its pathway is cofactor biosynthesis; coenzyme A biosynthesis; CoA from (R)-pantothenate: step 1/5. Functionally, catalyzes the phosphorylation of pantothenate (Pan), the first step in CoA biosynthesis. This Verminephrobacter eiseniae (strain EF01-2) protein is Type III pantothenate kinase.